The chain runs to 809 residues: Transitional endoplasmic reticulum ATPase homolog 1 (809 aa).

The segment at 1 to 21 is disordered; it reads MASVPTHQSEKEKKNDELSTA. Positions 8–21 are enriched in basic and acidic residues; sequence QSEKEKKNDELSTA. ATP-binding positions include 253–259, Asn354, His390, and 527–532; these read PGTGKTL and GCGKTL. The disordered stretch occupies residues 779 to 809; the sequence is FGNNFKFPGEQRGSDAPSAPVPAQDDDDLYN. Residues 803–809 are interaction with ufd-2; that stretch reads DDDDLYN.

The protein belongs to the AAA ATPase family. CDC48 subfamily. In terms of assembly, homohexamer; oligomerization is ATP-independent. Forms a ring-shaped particle of 18.3 nm diameter, that displays 6-fold radial symmetry. Interacts with cdc-48.2 and thus may form heterohexamers. Forms a complex composed of cdc-48.1, him-6 and crp-1; within the complex, interacts with helicase him-6 and GTPase crp-1. Forms a complex composed of deubiquitinating enzyme atx-3, adapter ubxn-5 and cdc-48.1; within the complex, interacts (via N-terminus) with ubxn-5 and with atx-3. Forms a complex composed of deubiquitinating enzyme atx-3, E4 ubiquitin-protein ligase ufd-2 and cdc-48.1; within the complex, interacts with atx-3 and (via DDDLYN motif) with ufd-2. Interacts (via N-terminus) with atx-3 (via RRDR motif); the interaction is not required for atx-3 enzymatic activity. Forms a complex composed of cdc-48.1, myosin chaperone unc-45, ubiquitin-protein ligases ufd-2 and chn-1; within the complex, interacts (via DDDLYN motif) with ufd-2 and targets myosin chaperone unc-45 for proteasomal degradation. Forms a complex composed of ubxn-3, ufd-1, npl-4.1 and cdc-48.1; within the complex, interacts (via N-terminus) with ubxn-3 (via FPK motif) and with ufd-1. Forms a complex composed of ubxn-3, cdc-48.1 and/or cdc-48.2 and substrate cdt-1. Interacts (via N-terminus) with ubxn-1. Interacts (via N-terminus) with ubxn-2. Interacts (via N-terminus) with ubxn-4. Interacts with ubxn-6. Interacts with ufd-3. Does not interact with air-2. As to expression, expressed in germ cells and spermatheca. Expressed in body wall muscles.

The protein localises to the cytoplasm. Its subcellular location is the perinuclear region. It catalyses the reaction ATP + H2O = ADP + phosphate + H(+). The first ATP-binding region has low ATPase activity. The second ATP-binding region is responsible for ATPase activity. ATP binding to the first ATP-binding region induces intrinsic activity of the second ATP-binding region. While ATP binding to the first ATP-binding region appears to prevent ATP hydrolysis by the second ATP-binding region, ADP-binding to first region promotes the coordinate and cooperative ATPase cycle of the second ATP-binding region. ATP binding to the first ATP-binding region induces a conformational change, promoting the rotation of the first ATP-binding region relative to the second ATP-binding region in the hexamer. Inhibited by N-ethylmaleimide (NEM). Its function is as follows. ATP-dependent chaperone which probably uses the energy provided by ATP hydrolysis to generate mechanical force to unfold substrate proteins, disassemble protein complexes, and disaggregate protein aggregates. Can also prevent aggregation of unfolded proteins also in an ATP-independent manner. Targets polyubiquitinated proteins for proteasomal degradation by binding to 'Lys-48'-linked polyubiquitin chains. Involved in the cytoplasmic elimination of misfolded proteins exported from the ER. This pathway, known as ERAD, prevents the activation of the unfolded protein response (UPR) caused by the accumulation of misfolded proteins in the ER. In association with helicase him-6 and GTPase crp-1, regulates the unfolded protein response (UPR) following ER stress, probably independently of the ERAD pathway. Together with udf-2 and chn-1, regulates myosin assembly in body wall muscles by targeting myosin chaperone unc-45 for proteasomal degradation. Together with the ufd-1-npl-4 complex, controls the switch from spermatogenesis to oogenesis by regulating E3 ligase cul-2 complex-mediated tra-1 proteasomal degradation. During oocyte meiosis and together with cdc-48.2, required for chromosome condensation at the diakinesis phase in prophase I and for progression of metaphase I. During the first embryonic cell division, regulates DNA replication and thus chromosome segregation and decondensation, and nuclear envelope re-assembly. In S phase and in association with ufd-1, npl-4.1 and/or npl-4.2 and ubxn-3, ensures the degradation of DNA licensing factor cdt-1 after the initiation of DNA replication and thus the disassembly of the DNA replication CMG helicase complex by promoting the dissociation from chromatin of several of its components including cdc-45 and sld-5. Regulates ubxn-3 nuclear localization during S phase. During the first embryonic cell divisions and together with cdc-48.2, regulates the re-assembly of the nuclear envelope after mitosis possibly by inactivating kinase air-2, a component of the chromosomal passenger complex (CPC). However, in another study, cdc-48.1 does not appear to be implicated in the regulation of air-2. The protein is Transitional endoplasmic reticulum ATPase homolog 1 of Caenorhabditis elegans.